A 609-amino-acid chain; its full sequence is PTS system beta-glucoside-specific EIIBCA component (609 aa).

One can recognise a PTS EIIB type-1 domain in the interval 1–86; it reads MDYDKLSKDI…VRHSNLSDEK (86 aa). Cys26 (phosphocysteine intermediate; for EIIB activity) is an active-site residue. The 357-residue stretch at 103–459 folds into the PTS EIIC type-1 domain; the sequence is DVISGVFTPI…GSQQPAVHEG (357 aa). 10 helical membrane passes run 112-132, 141-161, 174-194, 202-222, 246-266, 281-301, 321-341, 351-371, 379-399, and 412-432; these read ILPA…AVTF, VHVI…LLLA, VAAA…LGAG, LPVT…SIWI, FTLL…GAIL, AGLV…MTGM, LLPA…AVFL, LALT…MYGV, FAAA…TGVA, and IPVF…IAFA. In terms of domain architecture, PTS EIIA type-1 spans 480 to 584; that stretch reads DGVFSAGVMG…DVITPVIVTN (105 aa). The active-site Tele-phosphohistidine intermediate; for EIIA activity is the His532.

The protein localises to the cell membrane. The phosphoenolpyruvate-dependent sugar phosphotransferase system (sugar PTS), a major carbohydrate active -transport system, catalyzes the phosphorylation of incoming sugar substrates concomitantly with their translocation across the cell membrane. This system is involved in beta-glucoside transport. The polypeptide is PTS system beta-glucoside-specific EIIBCA component (bglP) (Bacillus subtilis (strain 168)).